Consider the following 131-residue polypeptide: Maturin (131 aa).

Tyr-34 carries the phosphotyrosine modification. Residues 107–120 (FEEYSADVEEEEPE) are compositionally biased toward acidic residues. The interval 107–131 (FEEYSADVEEEEPEADHPQMGVSQQ) is disordered.

The protein belongs to the MTURN family. Post-translationally, phosphorylation at Tyr-34 is essential for its ability to promote megakaryocyte differentiation.

Its subcellular location is the cytoplasm. Promotes megakaryocyte differentiation by enhancing ERK and JNK signaling as well as up-regulating RUNX1 and FLI1 expression. Represses NF-kappa-B transcriptional activity by inhibiting phosphorylation of RELA at 'Ser- 536'. May be involved in early neuronal development. The chain is Maturin (MTURN) from Bos taurus (Bovine).